The following is a 75-amino-acid chain: uncharacterized protein (75 aa).

The signal sequence occupies residues 1 to 21 (MRLIVVSIMVTLLSGCGSIIS).

It to E.coli YidQ.

This is an uncharacterized protein from Escherichia coli O157:H7.